The following is a 365-amino-acid chain: 3-dehydroquinate synthase (365 aa).

NAD(+) contacts are provided by residues 75–80 (DAENGK), 109–113 (GAATD), 133–134 (TT), Lys146, and Lys155. Zn(2+)-binding residues include Glu188, His253, and His269.

Belongs to the sugar phosphate cyclases superfamily. Dehydroquinate synthase family. The cofactor is Co(2+). Zn(2+) serves as cofactor. NAD(+) is required as a cofactor.

Its subcellular location is the cytoplasm. The enzyme catalyses 7-phospho-2-dehydro-3-deoxy-D-arabino-heptonate = 3-dehydroquinate + phosphate. Its pathway is metabolic intermediate biosynthesis; chorismate biosynthesis; chorismate from D-erythrose 4-phosphate and phosphoenolpyruvate: step 2/7. Functionally, catalyzes the conversion of 3-deoxy-D-arabino-heptulosonate 7-phosphate (DAHP) to dehydroquinate (DHQ). The sequence is that of 3-dehydroquinate synthase from Corynebacterium glutamicum (strain R).